The following is a 522-amino-acid chain: Glucans biosynthesis protein G (522 aa).

Positions 1–33 (MLVNILSKKPRAASVRWLGATVLFTLLTSPAWA) are cleaved as a signal peptide.

This sequence belongs to the OpgD/OpgG family.

The protein resides in the periplasm. It participates in glycan metabolism; osmoregulated periplasmic glucan (OPG) biosynthesis. Functionally, involved in the biosynthesis of osmoregulated periplasmic glucans (OPGs). The chain is Glucans biosynthesis protein G from Serratia proteamaculans (strain 568).